The sequence spans 354 residues: MEKQIFEHSVNVEEEHYQPKQEFHNMEAKLDEALDGELLDAQLEQALKPKSSFRKTLLKFTALLFGLATVAQSVQWIWDSYQKHQWIYLAFALVSLIIILLGIKEIICEWRRLVRLKKREQWQQQSQQIWLESAVKNGDVFSVHNAEKSKILCLDIAKSLGLENDSPTVIQWQHQLNEAYSAQEIAHLFSRHVLSSFDAQAKKLISKMAAESAVIVAISPLAVVDMFFIAWRNLRLMNKIAEIYGIELGYFPRIRLLRMVLVNIAFAGATEVAQDIGMDWLSQDVTAKLSTRIAQGIGVGLLTARLGVKAMELCRPLAFQLNEKPKLSHIQQELLSSVKDIVLGKNKIYKKEQI.

The next 3 helical transmembrane spans lie at 57–77, 87–107, and 211–231; these read LLKFTALLFGLATVAQSVQWI, IYLAFALVSLIIILLGIKEII, and ESAVIVAISPLAVVDMFFIAW.

This sequence belongs to the UPF0283 family.

The protein resides in the cell inner membrane. This Haemophilus influenzae (strain ATCC 51907 / DSM 11121 / KW20 / Rd) protein is UPF0283 membrane protein HI_0043.